We begin with the raw amino-acid sequence, 448 residues long: Ribosomal protein uS12 methylthiotransferase RimO (448 aa).

In terms of domain architecture, MTTase N-terminal spans 7-123 (EKVSLVSLGC…IAEIIAEKEG (117 aa)). Residues Cys-16, Cys-52, Cys-86, Cys-161, Cys-165, and Cys-168 each contribute to the [4Fe-4S] cluster site. Positions 147–377 (SSPYYTAYLK…MRTQARVSFK (231 aa)) constitute a Radical SAM core domain. One can recognise a TRAM domain in the interval 380–448 (RSLVDTEELV…DYDLIGEIVP (69 aa)).

The protein belongs to the methylthiotransferase family. RimO subfamily. The cofactor is [4Fe-4S] cluster.

The protein localises to the cytoplasm. The enzyme catalyses L-aspartate(89)-[ribosomal protein uS12]-hydrogen + (sulfur carrier)-SH + AH2 + 2 S-adenosyl-L-methionine = 3-methylsulfanyl-L-aspartate(89)-[ribosomal protein uS12]-hydrogen + (sulfur carrier)-H + 5'-deoxyadenosine + L-methionine + A + S-adenosyl-L-homocysteine + 2 H(+). Functionally, catalyzes the methylthiolation of an aspartic acid residue of ribosomal protein uS12. This Geotalea uraniireducens (strain Rf4) (Geobacter uraniireducens) protein is Ribosomal protein uS12 methylthiotransferase RimO.